We begin with the raw amino-acid sequence, 467 residues long: ATP synthase subunit beta (467 aa).

156-163 (GGAGVGKT) is a binding site for ATP.

Belongs to the ATPase alpha/beta chains family. In terms of assembly, F-type ATPases have 2 components, CF(1) - the catalytic core - and CF(0) - the membrane proton channel. CF(1) has five subunits: alpha(3), beta(3), gamma(1), delta(1), epsilon(1). CF(0) has three main subunits: a(1), b(2) and c(9-12). The alpha and beta chains form an alternating ring which encloses part of the gamma chain. CF(1) is attached to CF(0) by a central stalk formed by the gamma and epsilon chains, while a peripheral stalk is formed by the delta and b chains.

The protein localises to the cell membrane. It catalyses the reaction ATP + H2O + 4 H(+)(in) = ADP + phosphate + 5 H(+)(out). In terms of biological role, produces ATP from ADP in the presence of a proton gradient across the membrane. The catalytic sites are hosted primarily by the beta subunits. This is ATP synthase subunit beta from Cytobacillus firmus (Bacillus firmus).